Reading from the N-terminus, the 57-residue chain is Potassium channel toxin gamma-KTx 2.1 (57 aa).

An N-terminal signal peptide occupies residues 1–21; sequence MKISFVLLLTLFICSIGWSEA. Cystine bridges form between cysteine 28/cysteine 49, cysteine 34/cysteine 54, and cysteine 38/cysteine 56.

This sequence belongs to the short scorpion toxin superfamily. Potassium channel inhibitor family. Gamma-KTx 2 subfamily. As to expression, expressed by the venom gland.

The protein resides in the secreted. Functionally, blocks human and/or rat Kv11.1/KCNH2/ERG1, Kv11.2/KCNH6/ERG2 and Kv11.3/KCNH7/ERG3 by binding to channel outer vestibule (S5P domain) with a 1:1 stoichiometry. Inhibition data are the following: hERG1 (reversible, Kd=7.7 nM, IC(50)=3.3 nM, IC(50)=11.9 nM), rERG1 (reversible, Kd=19 nM), hERG2 (reversible, Kd=77 nM), rERG2 (irreversible, Kd=4.2 nM), hERG3 (reversible, Kd=11.5 nM) and rERG3 (reversible, Kd=747 nM) potassium channels. Also has a minimal effect on rat ELK1/KCNH4 potassium channels (9% inhibition at 100 nM). Both this toxin and CnErgTx1 (AC Q86QT3) share mechanism of action and have overlapping binding sites on ERG1. The potency of these two toxins is not affected by elevating potassium ion concentration from 2 to 98 mM. In addition, at high toxin concentrations, block of ERG1 macroscopic currents by these two toxins is incomplete (88%). The blockade by this toxin is preferentially closed channel state-dependent, with a component of open, but not inactive state-dependent blockade. This toxin produces a concentration-dependent prolongation of QTc in the isolated rabbit heart (16.3% at 100 nM). The protein is Potassium channel toxin gamma-KTx 2.1 of Mesobuthus eupeus (Lesser Asian scorpion).